A 147-amino-acid chain; its full sequence is Large ribosomal subunit protein uL15 (147 aa).

Residues 1-13 (MELHSLKAAEGSR) are compositionally biased toward basic and acidic residues. The tract at residues 1-57 (MELHSLKAAEGSRKVRNRVGRGTSSGNGKTSGRGQKGQKSRSGGGVRPGFEGGQTEL) is disordered. 2 stretches are compositionally biased toward gly residues: residues 23-35 (TSSG…GRGQ) and 42-52 (SGGGVRPGFEG).

The protein belongs to the universal ribosomal protein uL15 family. In terms of assembly, part of the 50S ribosomal subunit.

Functionally, binds to the 23S rRNA. The protein is Large ribosomal subunit protein uL15 of Lactococcus lactis subsp. cremoris (strain MG1363).